The primary structure comprises 394 residues: MNKKSIRDVDLKGKRVFCRVDFNVPMKEGKITDETRIRAALPTIQYLVEQGAKVILASHLGRPKGQAVEELRLTPVAARLGELLGKDVKKADEAFGPVAQEMVAAMNEGDVLVLENVRFYAGEEKNDAELAKEFAALADIFVNDAFGAAHRAHASTAGIADYLPAVSGLLMEKELEVLGKALSNPERPFTAIIGGAKVKDKIGVIRHLLDKVDNLIIGGGLAYTFVKALGHEIGLSLCEDDKIELAKEFMQLAKEKGVNFYMPVDVVITEEFSETATTKIVGIDSIPSNWEGVDIGPKTREIYADVIKNSKLVVWNGPMGVFEMTPFAEGTKAVGQALADAEGTYSVIGGGDSAAAVEKFGMADKMSHISTGGGASLEFMEGKELPGVVCLNDK.

Residues 21-23 (DFN), Arg36, 59-62 (HLGR), Arg118, and Arg151 each bind substrate. Ser183 is modified (phosphoserine). ATP is bound by residues Lys201 and Gly292. Position 299 is a phosphothreonine (Thr299). ATP contacts are provided by residues Glu323 and 350 to 353 (GGDS).

Belongs to the phosphoglycerate kinase family. As to quaternary structure, monomer.

The protein resides in the cytoplasm. It catalyses the reaction (2R)-3-phosphoglycerate + ATP = (2R)-3-phospho-glyceroyl phosphate + ADP. The protein operates within carbohydrate degradation; glycolysis; pyruvate from D-glyceraldehyde 3-phosphate: step 2/5. This chain is Phosphoglycerate kinase, found in Bacillus thuringiensis (strain Al Hakam).